The following is a 397-amino-acid chain: 3-ketoacyl-CoA thiolase, mitochondrial (397 aa).

Residues 1–16 (MALLRGVFIVAAKRTP) constitute a mitochondrion; not cleaved transit peptide. The residue at position 25 (Lys-25) is an N6-acetyllysine; alternate. At Lys-25 the chain carries N6-succinyllysine; alternate. Residue Ser-28 is modified to Phosphoserine. At Lys-45 the chain carries N6-succinyllysine. Cys-92 serves as the catalytic Acyl-thioester intermediate. Position 119 is a phosphothreonine (Thr-119). Ser-121 carries the phosphoserine modification. The residue at position 127 (Tyr-127) is a Phosphotyrosine. Thr-136 carries the phosphothreonine modification. N6-acetyllysine; alternate is present on residues Lys-137, Lys-143, Lys-158, Lys-171, Lys-191, and Lys-209. Residues Lys-137, Lys-143, Lys-158, Lys-171, Lys-191, and Lys-209 each carry the N6-succinyllysine; alternate modification. Lys-211, Lys-212, and Lys-214 each carry N6-succinyllysine. 2 residues coordinate CoA: Arg-224 and Thr-227. Lys-234 carries the N6-acetyllysine; alternate modification. Lys-234 carries the post-translational modification N6-succinyllysine; alternate. Lys-240 is modified (N6-succinyllysine). Residue Lys-241 is modified to N6-acetyllysine. A CoA-binding site is contributed by Ser-251. An N6-acetyllysine mark is found at Lys-269 and Lys-270. Lys-305 bears the N6-acetyllysine; alternate mark. The residue at position 305 (Lys-305) is an N6-succinyllysine; alternate. Ser-310 is modified (phosphoserine). An N6-acetyllysine; alternate modification is found at Lys-312. Lys-312 is modified (N6-succinyllysine; alternate). Lys-340 is subject to N6-acetyllysine. At Ser-344 the chain carries Phosphoserine. N6-acetyllysine is present on Lys-375. Cys-382 acts as the Proton donor/acceptor in catalysis.

It belongs to the thiolase-like superfamily. Thiolase family. Homotetramer. Interacts with BNIP3.

It is found in the mitochondrion. The catalysed reaction is an acyl-CoA + acetyl-CoA = a 3-oxoacyl-CoA + CoA. It catalyses the reaction 2 acetyl-CoA = acetoacetyl-CoA + CoA. It carries out the reaction acetyl-CoA + H2O = acetate + CoA + H(+). The enzyme catalyses propanoyl-CoA + H2O = propanoate + CoA + H(+). The catalysed reaction is butanoyl-CoA + H2O = butanoate + CoA + H(+). It catalyses the reaction hexanoyl-CoA + H2O = hexanoate + CoA + H(+). It carries out the reaction octanoyl-CoA + H2O = octanoate + CoA + H(+). The enzyme catalyses decanoyl-CoA + H2O = decanoate + CoA + H(+). The catalysed reaction is dodecanoyl-CoA + H2O = dodecanoate + CoA + H(+). It catalyses the reaction tetradecanoyl-CoA + H2O = tetradecanoate + CoA + H(+). It carries out the reaction hexadecanoyl-CoA + H2O = hexadecanoate + CoA + H(+). The protein operates within lipid metabolism; fatty acid beta-oxidation. In the production of energy from fats, this is one of the enzymes that catalyzes the last step of the mitochondrial beta-oxidation pathway, an aerobic process breaking down fatty acids into acetyl-CoA. Using free coenzyme A/CoA, catalyzes the thiolytic cleavage of medium- to long-chain unbranched 3-oxoacyl-CoAs into acetyl-CoA and a fatty acyl-CoA shortened by two carbon atoms. Also catalyzes the condensation of two acetyl-CoA molecules into acetoacetyl-CoA and could be involved in the production of ketone bodies. Also displays hydrolase activity on various fatty acyl-CoAs. Thereby, could be responsible for the production of acetate in a side reaction to beta-oxidation. Abolishes BNIP3-mediated apoptosis and mitochondrial damage. This is 3-ketoacyl-CoA thiolase, mitochondrial (Acaa2) from Mus musculus (Mouse).